The sequence spans 210 residues: Glutathione S-transferase P (210 aa).

A GST N-terminal domain is found at 2–81 (PPYTIVYFPV…HLGRTLGLYG (80 aa)). Tyr-4 is subject to Phosphotyrosine; by EGFR. Glutathione-binding positions include Tyr-8, Arg-14, Trp-39, Lys-45, and 52–53 (QL). The residue at position 62 (Thr-62) is a Phosphothreonine. Glutathione is bound at residue 65–66 (QS). The GST C-terminal domain maps to 83 to 204 (DQQEAALVDM…ASPEHMNRPI (122 aa)). N6-succinyllysine is present on residues Lys-103 and Lys-116. N6-acetyllysine is present on Lys-128.

It belongs to the GST superfamily. Pi family. In terms of assembly, homodimer. Interacts with CDK5.

The protein localises to the cytoplasm. The protein resides in the mitochondrion. It is found in the nucleus. It catalyses the reaction RX + glutathione = an S-substituted glutathione + a halide anion + H(+). It carries out the reaction prostaglandin J2 + glutathione = prostaglandin J2-S-(R)-glutathione. The catalysed reaction is prostaglandin J2 + glutathione = prostaglandin J2-S-(S)-glutathione. The enzyme catalyses prostaglandin A2 + glutathione = prostaglandin A2-S-(S)-glutathione. It catalyses the reaction 11(S)-hydroxy-14(S),15(S)-epoxy-(5Z,8Z,12E)-eicosatrienoate + glutathione = (11S,15S)-dihydroxy-14(R)-S-glutathionyl-(5Z,8Z,12E)-eicosatrienoate. Its function is as follows. Conjugation of reduced glutathione to a wide number of exogenous and endogenous hydrophobic electrophiles. Involved in the formation of glutathione conjugates of both prostaglandin A2 (PGA2) and prostaglandin J2 (PGJ2). Participates in the formation of novel hepoxilin regioisomers. Negatively regulates CDK5 activity via p25/p35 translocation to prevent neurodegeneration. The polypeptide is Glutathione S-transferase P (GSTP1) (Bos taurus (Bovine)).